The primary structure comprises 621 residues: KIF-binding protein (621 aa).

Ser-178 is subject to Phosphoserine.

The protein belongs to the KIF-binding protein family. In terms of assembly, interacts with KIF1B; positively regulates KIF1B microtubule motor activity. Interacts with STMN2.

The protein resides in the cytoplasm. Its subcellular location is the cytoskeleton. Activator of KIF1B plus-end-directed microtubule motor activity. Required for organization of axonal microtubules, and axonal outgrowth and maintenance during peripheral and central nervous system development. The chain is KIF-binding protein (KIFBP) from Bos taurus (Bovine).